The sequence spans 277 residues: Diaminopimelate epimerase (277 aa).

N13, Q46, and N66 together coordinate substrate. The active-site Proton donor is the C75. Substrate is bound by residues 76–77 (GN), N160, N193, and 211–212 (ER). The active-site Proton acceptor is the C220. 221-222 (GS) provides a ligand contact to substrate.

Belongs to the diaminopimelate epimerase family. In terms of assembly, homodimer.

Its subcellular location is the cytoplasm. It carries out the reaction (2S,6S)-2,6-diaminopimelate = meso-2,6-diaminopimelate. Its pathway is amino-acid biosynthesis; L-lysine biosynthesis via DAP pathway; DL-2,6-diaminopimelate from LL-2,6-diaminopimelate: step 1/1. In terms of biological role, catalyzes the stereoinversion of LL-2,6-diaminopimelate (L,L-DAP) to meso-diaminopimelate (meso-DAP), a precursor of L-lysine and an essential component of the bacterial peptidoglycan. This chain is Diaminopimelate epimerase, found in Legionella pneumophila (strain Lens).